The chain runs to 124 residues: Apolipoprotein C-IV (124 aa).

Residues 1-27 (MSLLRCRQQTLPSLCLSVLFLACFVAS) form the signal peptide.

The protein belongs to the apolipoprotein C4 family.

Its subcellular location is the secreted. Its function is as follows. May participate in lipoprotein metabolism. The chain is Apolipoprotein C-IV (Apoc4) from Rattus norvegicus (Rat).